The following is a 340-amino-acid chain: Putative 2-hydroxyacid dehydrogenase C1773.17c (340 aa).

Residues 169 to 170 (AI), 249 to 251 (TAR), and Asp-275 contribute to the NAD(+) site. Arg-251 is an active-site residue. Residue Glu-280 is part of the active site. The active-site Proton donor is the His-298. Position 298–301 (298–301 (HCGV)) interacts with NAD(+).

It belongs to the D-isomer specific 2-hydroxyacid dehydrogenase family.

The sequence is that of Putative 2-hydroxyacid dehydrogenase C1773.17c from Schizosaccharomyces pombe (strain 972 / ATCC 24843) (Fission yeast).